We begin with the raw amino-acid sequence, 1556 residues long: Ubiquitin carboxyl-terminal hydrolase 47 (1556 aa).

Residues 117 to 231 (MKSDGEKAKS…AKKTAKVTSK (115 aa)) form a disordered region. Over residues 146–156 (ASGSSSPSKAK) the composition is skewed to low complexity. A phosphoserine mark is found at serine 172 and serine 173. Residues 180-189 (IKTTAAKISK) show a composition bias toward low complexity. Residues 191 to 200 (GSEKAPRASP) show a composition bias toward basic and acidic residues. The span at 208–219 (TEINSKNTSSES) shows a compositional bias: polar residues. The residue at position 238 (serine 238) is a Phosphoserine. The 384-residue stretch at 396–779 (VGLVNQAMTC…NAYMLMYRQV (384 aa)) folds into the USP domain. Cysteine 405 acts as the Nucleophile in catalysis. Composition is skewed to polar residues over residues 628-642 (NRSG…QLNG) and 661-673 (LSSG…SSSQ). The segment at 628–697 (NRSGNSGEQN…SSSTSKSAKQ (70 aa)) is disordered. The span at 688–697 (SSSTSKSAKQ) shows a compositional bias: low complexity. Histidine 720 acts as the Proton acceptor in catalysis. A disordered region spans residues 1087–1148 (EPMSQPSPSH…LSSPEDEAAS (62 aa)). Over residues 1109 to 1125 (DGDRTLVETDNMAHRGG) the composition is skewed to basic and acidic residues. The segment covering 1128-1141 (SQVSSTSHSPQLSS) has biased composition (low complexity). Phosphoserine occurs at positions 1131, 1132, 1140, 1141, 1199, 1201, and 1205.

This sequence belongs to the peptidase C19 family. As to quaternary structure, interacts with ttk.

It is found in the nucleus. The catalysed reaction is Thiol-dependent hydrolysis of ester, thioester, amide, peptide and isopeptide bonds formed by the C-terminal Gly of ubiquitin (a 76-residue protein attached to proteins as an intracellular targeting signal).. In terms of biological role, ubiquitin-specific protease that deubiquitinates target proteins to regulate different cellular and developmental pathways. Functions downstream of Dsor1/MEK to positively regulate the Ras/MAPK signaling pathway. Likely to modulate the pathway during various cellular and developmental processes including rl/MAPK activation by the receptors InR, Egfr and sevenless/sev. Functions in the post-translational stabilization of rl/MAPK levels in a mechanism that is independent of rl activity and opposes the activity of the E2 enzyme Unc6 and the putative E3 ligases poe, Ufd4 and Kcmf1, which mediate the ubiquitination and proteasomal degradation of rl. During eye development it may also act downstream of rl/MAPK to negatively regulate the Ras/MAPK signaling pathway by stabilizing the transcriptional repressor ttk and consequently inhibiting photoreceptor cell development. This suggests that at least during eye development, it may act in both the positive and negative regulation of the Ras/MAPK signaling pathway to mediate the development of different cell types. Positively regulates border follicle cell migration during oogenesis by mediating the deubiquitination and stabilization of slbo. In the wing disks it positively regulates wg signaling by stabilizing arm. Has an effect on position-effect variegation. The protein is Ubiquitin carboxyl-terminal hydrolase 47 of Drosophila melanogaster (Fruit fly).